A 507-amino-acid polypeptide reads, in one-letter code: ATP synthase subunit alpha, chloroplastic (507 aa).

170-177 serves as a coordination point for ATP; sequence GDRQTGKT. The residue at position 257 (Thr-257) is a Phosphothreonine.

The protein belongs to the ATPase alpha/beta chains family. As to quaternary structure, F-type ATPases have 2 components, CF(1) - the catalytic core - and CF(0) - the membrane proton channel. CF(1) has five subunits: alpha(3), beta(3), gamma(1), delta(1), epsilon(1). CF(0) has four main subunits: a, b, b' and c.

Its subcellular location is the plastid. It localises to the chloroplast thylakoid membrane. The catalysed reaction is ATP + H2O + 4 H(+)(in) = ADP + phosphate + 5 H(+)(out). In terms of biological role, produces ATP from ADP in the presence of a proton gradient across the membrane. The alpha chain is a regulatory subunit. The protein is ATP synthase subunit alpha, chloroplastic of Barbarea verna (Land cress).